An 820-amino-acid chain; its full sequence is Leucine--tRNA ligase (820 aa).

Positions 42–52 match the 'HIGH' region motif; it reads PYPSGDLHMGH. A 'KMSKS' region motif is present at residues 576–580; the sequence is KMSKS. Lys-579 is a binding site for ATP.

Belongs to the class-I aminoacyl-tRNA synthetase family.

It is found in the cytoplasm. It catalyses the reaction tRNA(Leu) + L-leucine + ATP = L-leucyl-tRNA(Leu) + AMP + diphosphate. The polypeptide is Leucine--tRNA ligase (Coxiella burnetii (strain CbuK_Q154) (Coxiella burnetii (strain Q154))).